A 447-amino-acid polypeptide reads, in one-letter code: UDP-N-acetyl-alpha-D-muramoyl-L-alanyl-L-glutamate epimerase (447 aa).

Belongs to the MurL family.

It catalyses the reaction UDP-N-acetyl-alpha-D-muramoyl-L-alanyl-L-glutamate + ATP + H2O = UDP-N-acetyl-alpha-D-muramoyl-L-alanyl-D-glutamate + AMP + diphosphate + H(+). Its pathway is cell wall biogenesis; peptidoglycan biosynthesis. Functionally, cell wall formation. Catalyzes epimerization of the terminal L-glutamate in UDP-N-acetyl-alpha-D-muramoyl-L-alanyl-L-glutamate. The polypeptide is UDP-N-acetyl-alpha-D-muramoyl-L-alanyl-L-glutamate epimerase (Micromonospora sp. (strain ATCC 39149 / NRRL 15099 / SCC 1413)).